Consider the following 84-residue polypeptide: Cytochrome b559 subunit alpha (84 aa).

The chain crosses the membrane as a helical span at residues 24-38 (IIHAVTLPAIFIAGF). Heme is bound at residue H26.

It belongs to the PsbE/PsbF family. As to quaternary structure, heterodimer of an alpha subunit and a beta subunit. PSII is composed of 1 copy each of membrane proteins PsbA, PsbB, PsbC, PsbD, PsbE, PsbF, PsbH, PsbI, PsbJ, PsbK, PsbL, PsbM, PsbT, PsbX, PsbY, Psb30/Ycf12, peripheral proteins PsbO, CyanoQ (PsbQ), PsbU, PsbV and a large number of cofactors. It forms dimeric complexes. It depends on heme b as a cofactor.

Its subcellular location is the cellular thylakoid membrane. In terms of biological role, this b-type cytochrome is tightly associated with the reaction center of photosystem II (PSII). PSII is a light-driven water:plastoquinone oxidoreductase that uses light energy to abstract electrons from H(2)O, generating O(2) and a proton gradient subsequently used for ATP formation. It consists of a core antenna complex that captures photons, and an electron transfer chain that converts photonic excitation into a charge separation. The polypeptide is Cytochrome b559 subunit alpha (Prochlorococcus marinus (strain MIT 9301)).